The sequence spans 144 residues: MLGSFFFLAIISCVMSYINVDPMKSSFFLIFSLLMVMPLISFFLHVWFSYFICLLFLSGIFVILVYFSSLSKIGYVVTPFYFVGGVLSVFFFYPFFYSVTDVVAVNNFYFSVYWMLLVWVIFVLIFFMNFTSYFLNFSGALRKV.

Helical transmembrane passes span 1-21 (MLGS…INVD), 26-46 (SFFL…FLHV), 47-67 (WFSY…LVYF), 76-96 (VVTP…YPFF), and 108-128 (FYFS…IFFM).

The protein belongs to the complex I subunit 6 family.

The protein resides in the mitochondrion membrane. It catalyses the reaction a ubiquinone + NADH + 5 H(+)(in) = a ubiquinol + NAD(+) + 4 H(+)(out). In terms of biological role, core subunit of the mitochondrial membrane respiratory chain NADH dehydrogenase (Complex I) that is believed to belong to the minimal assembly required for catalysis. Complex I functions in the transfer of electrons from NADH to the respiratory chain. The immediate electron acceptor for the enzyme is believed to be ubiquinone. The sequence is that of NADH-ubiquinone oxidoreductase chain 6 (ND6) from Ascaris suum (Pig roundworm).